The primary structure comprises 221 residues: Transcription repressor OFP8 (221 aa).

Residues 124 to 138 show a composition bias toward acidic residues; it reads EDEGDKEESEDDDSD. The segment at 124–147 is disordered; it reads EDEGDKEESEDDDSDTLFSSRSFS. One can recognise an OVATE domain in the interval 158–217; it reads VVKKSKDPYEDFRTSMVEMIVERQIFAPAELQQLLQCFLSLNSRQHHKVIVQVFLEIYAT.

In terms of tissue distribution, expressed in roots, rosette and cauline leaves, shoots, stems, flower buds and siliques.

Its subcellular location is the nucleus. Transcriptional repressor that regulates multiple aspects of plant growth and development through the regulation of BEL1-LIKE (BLH) and KNOX TALE (KNAT) homeodomain transcription factors. The protein is Transcription repressor OFP8 (OFP8) of Arabidopsis thaliana (Mouse-ear cress).